We begin with the raw amino-acid sequence, 165 residues long: Nucleotide-binding protein MXAN_1478 (165 aa).

Belongs to the YajQ family.

Functionally, nucleotide-binding protein. This chain is Nucleotide-binding protein MXAN_1478, found in Myxococcus xanthus (strain DK1622).